Consider the following 132-residue polypeptide: Small ribosomal subunit protein uS8 (132 aa).

Belongs to the universal ribosomal protein uS8 family. As to quaternary structure, part of the 30S ribosomal subunit. Contacts proteins S5 and S12.

In terms of biological role, one of the primary rRNA binding proteins, it binds directly to 16S rRNA central domain where it helps coordinate assembly of the platform of the 30S subunit. This is Small ribosomal subunit protein uS8 from Borrelia duttonii (strain Ly).